Reading from the N-terminus, the 280-residue chain is UPF0494 membrane protein C750.06c (280 aa).

The next 4 membrane-spanning stretches (helical) occupy residues 107–127 (WPLL…KFEV), 144–164 (IWVP…SLIF), 178–198 (VIIA…GMII), and 199–219 (AALG…LYFG).

This sequence belongs to the UPF0494 family.

The protein resides in the cytoplasm. It localises to the vacuole. The protein localises to the membrane. This chain is UPF0494 membrane protein C750.06c, found in Schizosaccharomyces pombe (strain 972 / ATCC 24843) (Fission yeast).